Here is a 159-residue protein sequence, read N- to C-terminus: MADS-box transcription factor 23 (159 aa).

Positions 1 to 61 (MGRGKIEIKR…SRLYDFASSS (61 aa)) constitute an MADS-box domain. The 74-residue stretch at 86–159 (AKLWQQEAAS…QELSRKVVTT (74 aa)) folds into the K-box domain.

In terms of tissue distribution, expressed in seedling roots and developing seeds.

It localises to the nucleus. Functionally, probable transcription factor. This is MADS-box transcription factor 23 (MADS23) from Oryza sativa subsp. japonica (Rice).